The primary structure comprises 403 residues: Keratin, type I cytoskeletal 19 (403 aa).

Residues 1 to 82 (MTSYSYRQTS…AVSDGLLSGN (82 aa)) form a head region. Residue arginine 7 is modified to Omega-N-methylarginine. Residues serine 14 and serine 22 each carry the phosphoserine modification. Arginine 24 bears the Asymmetric dimethylarginine; alternate mark. Omega-N-methylarginine; alternate is present on arginine 24. At serine 27 the chain carries Phosphoserine. An Omega-N-methylarginine modification is found at arginine 32. A phosphoserine mark is found at serine 35 and serine 40. Arginine 43 and arginine 51 each carry omega-N-methylarginine. A Phosphoserine modification is found at serine 57. Arginine 64 carries the omega-N-methylarginine modification. Serine 67 and serine 75 each carry phosphoserine. Residues 83–118 (EKITMQNLNDRLASYLDKVRALEQANGELEVKIRDW) form a coil 1A region. The region spanning 83–394 (EKITMQNLND…SLLEGQEAHY (312 aa)) is the IF rod domain. Residues 119–136 (YQKQGPGPSRDYNHYFKT) are linker 1. A coil 1B region spans residues 137-228 (IEDLRDKILG…KNHEEEITAL (92 aa)). Positions 229-251 (RSQVGGQVSVEVDSTPGVDLAKI) are linker 12. The necessary for interaction with PNN stretch occupies residues 247–393 (DLAKILSEMR…RSLLEGQEAH (147 aa)). Residues 252 to 390 (LSEMRSQYEI…ATYRSLLEGQ (139 aa)) form a coil 2 region. Threonine 326 bears the Phosphothreonine mark. A rod-like helical tail region spans residues 391-403 (EAHYNNLPTPKAI). A Phosphotyrosine modification is found at tyrosine 394.

Belongs to the intermediate filament family. Heterotetramer of two type I and two type II keratins. Interacts with PNN and the actin-binding domain of DMD.

Involved in the organization of myofibers. Together with KRT8, helps to link the contractile apparatus to dystrophin at the costameres of striated muscle. This is Keratin, type I cytoskeletal 19 (Krt19) from Mus musculus (Mouse).